The chain runs to 232 residues: Vesicle transport through interaction with t-SNAREs homolog 1B (232 aa).

N-acetylalanine is present on Ala-2. 2 interaction with CLINT1 regions span residues 2–23 (ATSA…GLLE) and 69–73 (APLTF). Topologically, residues 2-208 (ATSAASSEHF…SRKVITNKLL (207 aa)) are cytoplasmic. Positions 36 to 98 (AGTEEKKKLV…AKLHREVRST (63 aa)) form a coiled coil. Residue Thr-103 is modified to Phosphothreonine. Arg-107 carries the omega-N-methylarginine modification. At Ser-138 the chain carries Phosphoserine. The stretch at 160-201 (GSEIIEELGEQRDQLERTKSRLVNTNENLSKSRKILRSMSRK) forms a coiled coil. The chain crosses the membrane as a helical; Anchor for type IV membrane protein span at residues 209–229 (LSVIIVLELAILVGLVYYKFF). The Vesicular segment spans residues 230-232 (RHH).

The protein belongs to the VTI1 family. Forms a SNARE complex with STX7, STX8 and VAMP8 which functions in the homotypic fusion of late endosomes. Component of the SNARE complex composed of STX7, STX8, VAMP7 and VIT1B that is required for heterotypic fusion of late endosomes with lysosomes. May interact with STX17. Interacts with CLINT1.

It localises to the early endosome membrane. The protein localises to the late endosome membrane. Its subcellular location is the lysosome membrane. The protein resides in the cytoplasmic granule. It is found in the recycling endosome membrane. In terms of biological role, V-SNARE that mediates vesicle transport pathways through interactions with t-SNAREs on the target membrane. These interactions are proposed to mediate aspects of the specificity of vesicle trafficking and to promote fusion of the lipid bilayers. This is Vesicle transport through interaction with t-SNAREs homolog 1B (Vti1b) from Rattus norvegicus (Rat).